The following is a 477-amino-acid chain: Ribulose bisphosphate carboxylase large chain (477 aa).

Positions 1–2 (MS) are excised as a propeptide. Residue proline 3 is modified to N-acetylproline. Lysine 14 carries the post-translational modification N6,N6,N6-trimethyllysine. Substrate contacts are provided by asparagine 123 and threonine 173. Catalysis depends on lysine 175, which acts as the Proton acceptor. Substrate is bound at residue lysine 177. The Mg(2+) site is built by lysine 201, aspartate 203, and glutamate 204. Lysine 201 carries the post-translational modification N6-carboxylysine. Histidine 294 serves as the catalytic Proton acceptor. Residues arginine 295, histidine 327, and serine 379 each coordinate substrate.

The protein belongs to the RuBisCO large chain family. Type I subfamily. Heterohexadecamer of 8 large chains and 8 small chains; disulfide-linked. The disulfide link is formed within the large subunit homodimers. Mg(2+) serves as cofactor. Post-translationally, the disulfide bond which can form in the large chain dimeric partners within the hexadecamer appears to be associated with oxidative stress and protein turnover.

It localises to the plastid. The enzyme catalyses 2 (2R)-3-phosphoglycerate + 2 H(+) = D-ribulose 1,5-bisphosphate + CO2 + H2O. It carries out the reaction D-ribulose 1,5-bisphosphate + O2 = 2-phosphoglycolate + (2R)-3-phosphoglycerate + 2 H(+). In terms of biological role, ruBisCO catalyzes two reactions: the carboxylation of D-ribulose 1,5-bisphosphate, the primary event in carbon dioxide fixation, as well as the oxidative fragmentation of the pentose substrate in the photorespiration process. Both reactions occur simultaneously and in competition at the same active site. The protein is Ribulose bisphosphate carboxylase large chain (rbcL) of Lathraea clandestina (Purple toothwort).